The sequence spans 95 residues: Defensin (95 aa).

A signal peptide spans 1–17 (MKNYVFALLVVTAVAIA). The propeptide occupies 18–55 (LPNEDKNAPMRVHLLPQKEDESLKLEVTPVKEHHRTRR). Cystine bridges form between cysteine 58–cysteine 85, cysteine 71–cysteine 91, and cysteine 75–cysteine 93.

Belongs to the invertebrate defensin family. Type 1 subfamily.

The protein localises to the secreted. In terms of biological role, antibacterial peptide mostly active against Gram-positive bacteria. This chain is Defensin, found in Formica aquilonia (Red wood ant).